A 633-amino-acid polypeptide reads, in one-letter code: Phosphomethylpyrimidine synthase (633 aa).

Residues Asn245, Met274, Tyr303, His339, 359 to 361, 400 to 403, and Glu439 each bind substrate; these read SRG and DGLR. His443 is a Zn(2+) binding site. Tyr466 serves as a coordination point for substrate. Position 507 (His507) interacts with Zn(2+). [4Fe-4S] cluster is bound by residues Cys587, Cys590, and Cys595.

This sequence belongs to the ThiC family. Homodimer. The cofactor is [4Fe-4S] cluster.

It catalyses the reaction 5-amino-1-(5-phospho-beta-D-ribosyl)imidazole + S-adenosyl-L-methionine = 4-amino-2-methyl-5-(phosphooxymethyl)pyrimidine + CO + 5'-deoxyadenosine + formate + L-methionine + 3 H(+). It functions in the pathway cofactor biosynthesis; thiamine diphosphate biosynthesis. Its function is as follows. Catalyzes the synthesis of the hydroxymethylpyrimidine phosphate (HMP-P) moiety of thiamine from aminoimidazole ribotide (AIR) in a radical S-adenosyl-L-methionine (SAM)-dependent reaction. This chain is Phosphomethylpyrimidine synthase, found in Neisseria meningitidis serogroup C / serotype 2a (strain ATCC 700532 / DSM 15464 / FAM18).